A 100-amino-acid polypeptide reads, in one-letter code: Aspartyl/glutamyl-tRNA(Asn/Gln) amidotransferase subunit C (100 aa).

The protein belongs to the GatC family. In terms of assembly, heterotrimer of A, B and C subunits.

The enzyme catalyses L-glutamyl-tRNA(Gln) + L-glutamine + ATP + H2O = L-glutaminyl-tRNA(Gln) + L-glutamate + ADP + phosphate + H(+). It carries out the reaction L-aspartyl-tRNA(Asn) + L-glutamine + ATP + H2O = L-asparaginyl-tRNA(Asn) + L-glutamate + ADP + phosphate + 2 H(+). Its function is as follows. Allows the formation of correctly charged Asn-tRNA(Asn) or Gln-tRNA(Gln) through the transamidation of misacylated Asp-tRNA(Asn) or Glu-tRNA(Gln) in organisms which lack either or both of asparaginyl-tRNA or glutaminyl-tRNA synthetases. The reaction takes place in the presence of glutamine and ATP through an activated phospho-Asp-tRNA(Asn) or phospho-Glu-tRNA(Gln). In Staphylococcus epidermidis (strain ATCC 35984 / DSM 28319 / BCRC 17069 / CCUG 31568 / BM 3577 / RP62A), this protein is Aspartyl/glutamyl-tRNA(Asn/Gln) amidotransferase subunit C.